The chain runs to 147 residues: Signal peptidase complex subunit 3 (147 aa).

Residues 1 to 6 are Cytoplasmic-facing; it reads MHSWVQ. Residues 7-29 form a helical; Signal-anchor for type II membrane protein membrane-spanning segment; the sequence is RLLTTATTAALLLLAACCAASAL. The Lumenal segment spans residues 30-147; it reads DAFHVPSVQA…EFNLPDSYTS (118 aa).

Belongs to the SPCS3 family. As to quaternary structure, component of the signal peptidase complex (SPC) composed of a catalytic subunit SEC11 and three accessory subunits SPCS1, SPCS2 and SPCS3. The complex induces a local thinning of the ER membrane which is used to measure the length of the signal peptide (SP) h-region of protein substrates. This ensures the selectivity of the complex towards h-regions shorter than 18-20 amino acids.

It localises to the endoplasmic reticulum membrane. Essential component of the signal peptidase complex (SPC) which catalyzes the cleavage of N-terminal signal sequences from nascent proteins as they are translocated into the lumen of the endoplasmic reticulum. Essential for the SPC catalytic activity, possibly by stabilizing and positioning the active center of the complex close to the lumenal surface. The chain is Signal peptidase complex subunit 3 from Oryza sativa subsp. japonica (Rice).